We begin with the raw amino-acid sequence, 262 residues long: Type III pantothenate kinase (262 aa).

6–13 (DAGNTNMV) is an ATP binding site. Residues Y100 and 107-110 (GADR) each bind substrate. D109 acts as the Proton acceptor in catalysis. D129 is a binding site for K(+). T132 contributes to the ATP binding site. Residue T184 coordinates substrate.

Belongs to the type III pantothenate kinase family. Homodimer. NH4(+) is required as a cofactor. The cofactor is K(+).

The protein resides in the cytoplasm. The catalysed reaction is (R)-pantothenate + ATP = (R)-4'-phosphopantothenate + ADP + H(+). It participates in cofactor biosynthesis; coenzyme A biosynthesis; CoA from (R)-pantothenate: step 1/5. Its function is as follows. Catalyzes the phosphorylation of pantothenate (Pan), the first step in CoA biosynthesis. This Clostridium tetani (strain Massachusetts / E88) protein is Type III pantothenate kinase.